The chain runs to 255 residues: Hydroxyacylglutathione hydrolase (255 aa).

Zn(2+) is bound by residues H52, H54, D56, H57, H109, D126, and H166.

The protein belongs to the metallo-beta-lactamase superfamily. Glyoxalase II family. In terms of assembly, monomer. The cofactor is Zn(2+).

It catalyses the reaction an S-(2-hydroxyacyl)glutathione + H2O = a 2-hydroxy carboxylate + glutathione + H(+). It participates in secondary metabolite metabolism; methylglyoxal degradation; (R)-lactate from methylglyoxal: step 2/2. Functionally, thiolesterase that catalyzes the hydrolysis of S-D-lactoyl-glutathione to form glutathione and D-lactic acid. This is Hydroxyacylglutathione hydrolase from Anaeromyxobacter dehalogenans (strain 2CP-C).